Consider the following 150-residue polypeptide: Large ribosomal subunit protein uL16 (150 aa).

It belongs to the universal ribosomal protein uL16 family. In terms of assembly, component of the small ribosomal subunit. Mature ribosomes consist of a small (40S) and a large (60S) subunit. The 40S subunit contains about 33 different proteins and 1 molecule of RNA (18S). The 60S subunit contains about 49 different proteins and 3 molecules of RNA (25S, 5.8S and 5S).

This Nicotiana tabacum (Common tobacco) protein is Large ribosomal subunit protein uL16 (RPL10).